The following is a 129-amino-acid chain: Replication initiation control protein YabA (129 aa).

His-103, Cys-105, Cys-119, and Cys-122 together coordinate Zn(2+).

The protein belongs to the YabA family. In terms of assembly, homotetramer. Interacts with both DnaA and DnaN, acting as a bridge between these two proteins. The cofactor is Zn(2+).

It localises to the cytoplasm. Its subcellular location is the nucleoid. Its function is as follows. Involved in control of chromosome replication initiation. Inhibits the cooperative binding of DnaA to the oriC region, thus negatively regulating initiation of chromosome replication. Inhibits the ability of DnaA-ATP to form a helix on DNA; does not disassemble preformed DnaA-DNA helices. Decreases the residence time of DnaA on the chromosome at its binding sites (oriC, replication forks and promoter-binding sites). Tethers DnaA to the replication machinery via the DNA polymerase beta sliding clamp subunit (dnaN). Associates with oriC and other DnaA targets on the chromosome in a DnaA-dependent manner. The chain is Replication initiation control protein YabA from Listeria innocua serovar 6a (strain ATCC BAA-680 / CLIP 11262).